A 59-amino-acid polypeptide reads, in one-letter code: Embryonic testis differentiation protein homolog C (59 aa).

Residues 1–22 are disordered; that stretch reads MDKELPKASPSEPALNIKKSGK.

The chain is Embryonic testis differentiation protein homolog C from Homo sapiens (Human).